The sequence spans 358 residues: Methionine aminopeptidase 2 (358 aa).

Substrate is bound at residue His111. A divalent metal cation contacts are provided by Asp131, Asp142, and His211. Residue His219 participates in substrate binding. Glu244 and Glu339 together coordinate a divalent metal cation.

The protein belongs to the peptidase M24A family. Methionine aminopeptidase eukaryotic type 2 subfamily. It depends on Co(2+) as a cofactor. Requires Zn(2+) as cofactor. The cofactor is Mn(2+). Fe(2+) serves as cofactor.

The protein localises to the cytoplasm. It catalyses the reaction Release of N-terminal amino acids, preferentially methionine, from peptides and arylamides.. In terms of biological role, cotranslationally removes the N-terminal methionine from nascent proteins. The N-terminal methionine is often cleaved when the second residue in the primary sequence is small and uncharged (Met-Ala-, Cys, Gly, Pro, Ser, Thr, or Val). This Laccaria bicolor (strain S238N-H82 / ATCC MYA-4686) (Bicoloured deceiver) protein is Methionine aminopeptidase 2.